The primary structure comprises 242 residues: N-alpha-acetyltransferase 60 (242 aa).

Topologically, residues 1–192 (MTEVVPSSAL…GGHPPWTILD (192 aa)) are cytoplasmic. Positions 13 to 182 (VSLRLLCHDD…DGFTYVLYIN (170 aa)) constitute an N-acetyltransferase domain. Y38 is a binding site for substrate. The residue at position 79 (K79) is an N6-acetyllysine; by autocatalysis. Y97 is a catalytic residue. L99 provides a ligand contact to substrate. 101–103 (LGV) contacts acetyl-CoA. K105, K109, and K121 each carry N6-acetyllysine; by autocatalysis. Residue 109 to 114 (KHGIGS) participates in acetyl-CoA binding. H138 is a catalytic residue. Acetyl-CoA contacts are provided by residues N143 and 150 to 153 (YENR). A required for homodimerization region spans residues 162-173 (PYYYSIRGVLKD). Y165 lines the substrate pocket. Residues 193–236 (YIQHLGSALANLSPCSIPHRIYRQAHSLLCSFLPWSSISTKGGI) constitute an intramembrane region (helical). At 237-242 (EYSRTM) the chain is on the cytoplasmic side.

The protein belongs to the acetyltransferase family. NAA60 subfamily. Monomer and homodimer; monomer in presence of substrate and homodimer in its absence. Post-translationally, acetylated: autoacetylation is required for optimal acetyltransferase activity.

Its subcellular location is the golgi apparatus membrane. The enzyme catalyses N-terminal L-methionyl-[transmembrane protein] + acetyl-CoA = N-terminal N(alpha)-acetyl-L-methionyl-[transmembrane protein] + CoA + H(+). It catalyses the reaction L-lysyl-[protein] + acetyl-CoA = N(6)-acetyl-L-lysyl-[protein] + CoA + H(+). N-alpha-acetyltransferase that specifically mediates the acetylation of N-terminal residues of the transmembrane proteins, with a strong preference for N-termini facing the cytosol. Displays N-terminal acetyltransferase activity towards a range of N-terminal sequences including those starting with Met-Lys, Met-Val, Met-Ala and Met-Met. Required for normal chromosomal segregation during anaphase. May also show histone acetyltransferase activity; such results are however unclear in vivo and would require additional experimental evidences. This chain is N-alpha-acetyltransferase 60 (Naa60), found in Mus musculus (Mouse).